We begin with the raw amino-acid sequence, 330 residues long: tRNA uridine(34) hydroxylase (330 aa).

The region spanning 123–217 is the Rhodanese domain; the sequence is SDPETILVDT…YLEEVPKEES (95 aa). The Cysteine persulfide intermediate role is filled by cysteine 177. The tract at residues 310 to 330 is disordered; that stretch reads LNKQQKQQAKEIARKKAKSEI. Positions 317–330 are enriched in basic and acidic residues; the sequence is QAKEIARKKAKSEI.

The protein belongs to the TrhO family.

It carries out the reaction uridine(34) in tRNA + AH2 + O2 = 5-hydroxyuridine(34) in tRNA + A + H2O. Catalyzes oxygen-dependent 5-hydroxyuridine (ho5U) modification at position 34 in tRNAs. The sequence is that of tRNA uridine(34) hydroxylase from Francisella philomiragia subsp. philomiragia (strain ATCC 25017 / CCUG 19701 / FSC 153 / O#319-036).